A 412-amino-acid chain; its full sequence is uncharacterized protein (412 aa).

A compositionally biased stretch (polar residues) spans 1 to 17 (MPSQGNNKNSENITQNP). Disordered stretches follow at residues 1–20 (MPSQGNNKNSENITQNPIEG), 223–243 (EQAVGQPIEQQSISDDEARQT), and 310–412 (QKQM…NPVA). Residues 340–355 (KLNSNTRGSSKRPSVN) show a composition bias toward polar residues. Positions 361-379 (GQRGRGGRGFYRGGRGRGG) are enriched in gly residues. Positions 390-402 (SNSNNSTSQPSPN) are enriched in low complexity. Residues 403–412 (AELSNFNPVA) are compositionally biased toward polar residues.

This is an uncharacterized protein from Schizosaccharomyces pombe (strain 972 / ATCC 24843) (Fission yeast).